Consider the following 1321-residue polypeptide: C-Jun-amino-terminal kinase-interacting protein 4 (1321 aa).

An N-acetylmethionine modification is found at M1. The region spanning 7–95 (VVYQEEPGGS…ITQYEREKAL (89 aa)) is the RH1 domain. A coiled-coil region spans residues 66–166 (AQDQEHQVEL…NALHQRHTEM (101 aa)). 5 positions are modified to phosphoserine: S109, S183, S185, S194, and S203. The interval 203–292 (SLGIFPLPAG…SDVATIPTDT (90 aa)) is disordered. T217 carries the post-translational modification Phosphothreonine. Residues 236 to 253 (ELSQPRSHTSLKVSNSPE) are compositionally biased toward polar residues. Phosphoserine is present on residues S238, S251, S265, S268, and S272. The segment covering 266-285 (DVSQGGSKATTPASTANSDV) has biased composition (polar residues). Position 292 is a phosphothreonine (T292). A phosphoserine mark is found at S311, S329, S332, and S347. 3 positions are modified to phosphothreonine: T348, T365, and T418. The stretch at 408–534 (REVENLILEN…LQEAVRWTEM (127 aa)) forms a coiled coil. A compositionally biased stretch (basic and acidic residues) spans 473–489 (LRKARAEAEDARQKAKD). 2 disordered regions span residues 473–500 (LRKA…TAQR) and 563–600 (SSNT…SQLP). An RH2 domain is found at 500–571 (RKRFTRVEMA…SSSNTTKKPE (72 aa)). Residue T586 is modified to Phosphothreonine. S588 is modified (phosphoserine). Phosphothreonine is present on T595. A phosphoserine mark is found at S705, S728, S730, S732, and S733. Residues 724 to 758 (SKQRSASQSSLDKLDQELKEQQKELKNQEELSSLV) adopt a coiled-coil conformation. The segment at 854–906 (GAATSPSTNGASPVMDKPPEMEAENSEVDENVPTAEEATEATEGNAGSAEDTV) is disordered. Polar residues predominate over residues 855 to 864 (AATSPSTNGA). Residues 874-883 (MEAENSEVDE) are compositionally biased toward acidic residues. Residues 894–903 (ATEGNAGSAE) show a composition bias toward low complexity. Phosphoserine is present on S1188. Residues 1239-1266 (PQSSSSGTDLTGDKAGPSAQEPGSQTPL) are disordered. Phosphothreonine is present on T1264.

The protein belongs to the JIP scaffold family. As to quaternary structure, homodimer. The homodimer interacts with ARF6, forming a heterotetramer. Homooligomer. Interacts with MAX, MAPK14, MAP3K3, MYC, KNS2 and MAP2K4. Interaction with KNS2 is important in the formation of ternary complex with MAPK8. Interacts with NFKB1. Interacts with PIP4P1. Interacts with PIKFYVE. Interacts with MAPK8, MAPK9, MAPK10. Post-translationally, phosphorylated by MAPK8 and MAPK14. In terms of tissue distribution, expressed only in testis on the round spermatids of stage I, II and II. Absent in spermatogonia and spermatocyte. As to expression, expressed in testis and in acute myeloid leukemia (AML) patients. Expressed in testis.

The protein localises to the cytoplasm. It is found in the perinuclear region. It localises to the lysosome membrane. The protein resides in the cytoplasmic vesicle. Its subcellular location is the secretory vesicle. The protein localises to the acrosome. Its activity is regulated as follows. May play a role in spermatozoa-egg-interaction. Its function is as follows. The JNK-interacting protein (JIP) group of scaffold proteins selectively mediates JNK signaling by aggregating specific components of the MAPK cascade to form a functional JNK signaling module. Regulates lysosomal positioning by acting as an adapter protein which links PIP4P1-positive lysosomes to the dynein-dynactin complex. Assists PIKFYVE selective functionality in microtubule-based endosome-to-TGN trafficking. This is C-Jun-amino-terminal kinase-interacting protein 4 from Homo sapiens (Human).